A 239-amino-acid polypeptide reads, in one-letter code: Geranylgeranylglyceryl phosphate synthase (239 aa).

Residues D19 and S48 each coordinate Mg(2+). Sn-glycerol 1-phosphate is bound by residues 167-173 (YLEAGSG), 197-198 (GG), and 219-220 (GT).

It belongs to the GGGP/HepGP synthase family. Group II subfamily. Mg(2+) serves as cofactor.

It localises to the cytoplasm. It carries out the reaction sn-glycerol 1-phosphate + (2E,6E,10E)-geranylgeranyl diphosphate = sn-3-O-(geranylgeranyl)glycerol 1-phosphate + diphosphate. It functions in the pathway membrane lipid metabolism; glycerophospholipid metabolism. In terms of biological role, prenyltransferase that catalyzes the transfer of the geranylgeranyl moiety of geranylgeranyl diphosphate (GGPP) to the C3 hydroxyl of sn-glycerol-1-phosphate (G1P). This reaction is the first ether-bond-formation step in the biosynthesis of archaeal membrane lipids. This is Geranylgeranylglyceryl phosphate synthase from Methanopyrus kandleri (strain AV19 / DSM 6324 / JCM 9639 / NBRC 100938).